Consider the following 147-residue polypeptide: MVEWTDSERAIITSIFSNLDYEEIGRKSLCRCLIVYPWTQRYFGAFGNLYNAETIMANPLIAAHGTKILHGLDRALKNMDDIKNTYAELSLLHSDKLHVDPDNFRLLADCLTVVIAAKMGSAFTVETQVAWQKFLSVVVSALGRQYH.

The Globin domain occupies 3–147 (EWTDSERAII…VVSALGRQYH (145 aa)). His-64 and His-93 together coordinate heme b.

This sequence belongs to the globin family. In terms of assembly, hb 3 is a heterotetramer of two alpha-2 and two beta-2 chains. Red blood cells.

Involved in oxygen transport from gills to the various peripheral tissues. The polypeptide is Hemoglobin subunit beta-2 (hbb2) (Boreogadus saida (Polar cod)).